The sequence spans 243 residues: SNDISFKFDKFDPNGKQLTFQGYASVLDTGVLQLNKVGTGLPKEIGGIARYVAPFQIWSKATGEVASFVTSFQFFLETSPNPANGASDGLTFFLAPPNSPLRRAGGYLGLFETSNKSDSSYQTVAVEFDTVGAPANTWDPGYPHIGVDVNRVTSIKTTKEKWNKRYKREVANVWITYQASSKTLTASLTYPQDQTSDSVSVDFKANLPEWVSVGFTGGTTVGGRETTHEILNWYFSSTLEYQT.

Asn-115 carries N-linked (GlcNAc...) asparagine glycosylation. The Mn(2+) site is built by Glu-127 and Asp-129. Residues Asp-129, Asn-136, and Asp-139 each coordinate Ca(2+). Residues Asp-139 and His-144 each coordinate Mn(2+).

The protein belongs to the leguminous lectin family. In terms of assembly, homodimer.

In terms of biological role, lactose- or galactose-binding anti-H(O) lectin. The sequence is that of Anti-H(O) lectin 2 from Cytisophyllum sessilifolium (Sessile-leaved cytisus).